Consider the following 407-residue polypeptide: 1-deoxy-D-xylulose 5-phosphate reductoisomerase (407 aa).

The NADPH site is built by threonine 25, glycine 26, serine 27, isoleucine 28, asparagine 53, and asparagine 136. Lysine 137 is a binding site for 1-deoxy-D-xylulose 5-phosphate. Position 138 (glutamate 138) interacts with NADPH. Aspartate 162 lines the Mn(2+) pocket. 1-deoxy-D-xylulose 5-phosphate contacts are provided by serine 163, glutamate 164, serine 188, and histidine 211. Glutamate 164 is a binding site for Mn(2+). Glycine 217 serves as a coordination point for NADPH. 1-deoxy-D-xylulose 5-phosphate is bound by residues serine 224, asparagine 229, lysine 230, and glutamate 233. Glutamate 233 is a Mn(2+) binding site.

The protein belongs to the DXR family. Mg(2+) is required as a cofactor. Requires Mn(2+) as cofactor.

The enzyme catalyses 2-C-methyl-D-erythritol 4-phosphate + NADP(+) = 1-deoxy-D-xylulose 5-phosphate + NADPH + H(+). It participates in isoprenoid biosynthesis; isopentenyl diphosphate biosynthesis via DXP pathway; isopentenyl diphosphate from 1-deoxy-D-xylulose 5-phosphate: step 1/6. Its function is as follows. Catalyzes the NADPH-dependent rearrangement and reduction of 1-deoxy-D-xylulose-5-phosphate (DXP) to 2-C-methyl-D-erythritol 4-phosphate (MEP). In Rhodopseudomonas palustris (strain TIE-1), this protein is 1-deoxy-D-xylulose 5-phosphate reductoisomerase.